The chain runs to 833 residues: Leucine--tRNA ligase (833 aa).

Residues 41–52 carry the 'HIGH' region motif; the sequence is PYPSGAGLHVGH. A 'KMSKS' region motif is present at residues 610 to 614; it reads KMSKS. K613 contacts ATP.

The protein belongs to the class-I aminoacyl-tRNA synthetase family.

The protein localises to the cytoplasm. The enzyme catalyses tRNA(Leu) + L-leucine + ATP = L-leucyl-tRNA(Leu) + AMP + diphosphate. The sequence is that of Leucine--tRNA ligase from Streptococcus pyogenes serotype M1.